A 1433-amino-acid polypeptide reads, in one-letter code: Probable serine/threonine-protein kinase DDB_G0277989 (1433 aa).

Residues 1–4 and lysine 41 contribute to the ATP site; that span reads MNEI. A Protein kinase 1 domain is found at 1-272; the sequence is MNEIIVGEYK…EFDDFTHPLS (272 aa). The active-site Proton acceptor is aspartate 151. Composition is skewed to low complexity over residues 332–362 and 533–550; these read NNNN…NNNN and TATT…TTTA. 2 disordered regions span residues 332 to 366 and 521 to 550; these read NNNN…SDGP and PSSE…TTTA. A Protein kinase 2 domain is found at 1177-1433; that stretch reads IYDKRYYIQK…QPHVCKSFKK (257 aa).

Belongs to the protein kinase superfamily. Ser/Thr protein kinase family.

The catalysed reaction is L-seryl-[protein] + ATP = O-phospho-L-seryl-[protein] + ADP + H(+). It catalyses the reaction L-threonyl-[protein] + ATP = O-phospho-L-threonyl-[protein] + ADP + H(+). The protein is Probable serine/threonine-protein kinase DDB_G0277989 of Dictyostelium discoideum (Social amoeba).